Reading from the N-terminus, the 652-residue chain is Carboxypeptidase Z (652 aa).

The N-terminal stretch at 1–20 (MPTTPLLLAALAALAALAVA) is a signal peptide. The FZ domain occupies 41-163 (THSATCVDLH…APEEEGCYDP (123 aa)). 5 disulfides stabilise this stretch: cysteine 46/cysteine 112, cysteine 54/cysteine 105, cysteine 96/cysteine 132, cysteine 121/cysteine 160, and cysteine 125/cysteine 149. A glycan (N-linked (GlcNAc...) asparagine) is linked at asparagine 60. The 317-residue stretch at 189–505 (AHHSYAQMVR…EPLLNFLEMV (317 aa)) folds into the Peptidase M14 domain. Residues histidine 251 and glutamate 254 each coordinate Zn(2+). An N-linked (GlcNAc...) asparagine glycan is attached at asparagine 284. Histidine 383 is a Zn(2+) binding site. Glutamate 475 acts as the Proton donor/acceptor in catalysis. Residues 594–628 (FLPGPSRALPRSLDPQGAPAQLDFEPPRARRQPAS) are disordered.

Belongs to the peptidase M14 family. Requires Zn(2+) as cofactor. Abundantly expressed in the placenta, with low to moderate levels in the brain, lung, thymus and kidney.

It is found in the secreted. It localises to the extracellular space. The protein resides in the extracellular matrix. With respect to regulation, inhibited by 2-mercaptomethyl-3-guanidinoethylthiopropanoic acid (MGTA) and guanidinoethylmercaptosuccinic acid (GEMSA). Inhibited by chelating agents such as EDTA and EGTA. Functionally, cleaves substrates with C-terminal arginine residues. Probably modulates the Wnt signaling pathway, by cleaving some undefined protein. May play a role in cleavage during prohormone processing. The polypeptide is Carboxypeptidase Z (Cpz) (Rattus norvegicus (Rat)).